We begin with the raw amino-acid sequence, 591 residues long: Aspartate--tRNA(Asp/Asn) ligase (591 aa).

Residue Glu-176 participates in L-aspartate binding. Residues 200 to 203 (QLFK) are aspartate. Arg-222 serves as a coordination point for L-aspartate. ATP-binding positions include 222-224 (RDE) and Gln-231. His-450 is an L-aspartate binding site. Glu-484 contacts ATP. Arg-491 serves as a coordination point for L-aspartate. Position 536–539 (536–539 (GLDR)) interacts with ATP.

Belongs to the class-II aminoacyl-tRNA synthetase family. Type 1 subfamily. As to quaternary structure, homodimer.

It is found in the cytoplasm. The enzyme catalyses tRNA(Asx) + L-aspartate + ATP = L-aspartyl-tRNA(Asx) + AMP + diphosphate. Aspartyl-tRNA synthetase with relaxed tRNA specificity since it is able to aspartylate not only its cognate tRNA(Asp) but also tRNA(Asn). Reaction proceeds in two steps: L-aspartate is first activated by ATP to form Asp-AMP and then transferred to the acceptor end of tRNA(Asp/Asn). This is Aspartate--tRNA(Asp/Asn) ligase from Bacillus cereus (strain B4264).